Here is a 196-residue protein sequence, read N- to C-terminus: 3-isopropylmalate dehydratase small subunit (196 aa).

The protein belongs to the LeuD family. LeuD type 1 subfamily. As to quaternary structure, heterodimer of LeuC and LeuD.

It carries out the reaction (2R,3S)-3-isopropylmalate = (2S)-2-isopropylmalate. The protein operates within amino-acid biosynthesis; L-leucine biosynthesis; L-leucine from 3-methyl-2-oxobutanoate: step 2/4. Its function is as follows. Catalyzes the isomerization between 2-isopropylmalate and 3-isopropylmalate, via the formation of 2-isopropylmaleate. The polypeptide is 3-isopropylmalate dehydratase small subunit (Rhodopirellula baltica (strain DSM 10527 / NCIMB 13988 / SH1)).